The primary structure comprises 359 residues: 3-dehydroquinate synthase (359 aa).

NAD(+)-binding positions include 71-76 (DGEQYK), 105-109 (GVIGD), 129-130 (TT), Lys-142, Lys-151, and 169-172 (CLST). Glu-184, His-247, and His-264 together coordinate Zn(2+).

Belongs to the sugar phosphate cyclases superfamily. Dehydroquinate synthase family. The cofactor is Co(2+). Zn(2+) is required as a cofactor. NAD(+) serves as cofactor.

It localises to the cytoplasm. The catalysed reaction is 7-phospho-2-dehydro-3-deoxy-D-arabino-heptonate = 3-dehydroquinate + phosphate. The protein operates within metabolic intermediate biosynthesis; chorismate biosynthesis; chorismate from D-erythrose 4-phosphate and phosphoenolpyruvate: step 2/7. Catalyzes the conversion of 3-deoxy-D-arabino-heptulosonate 7-phosphate (DAHP) to dehydroquinate (DHQ). This is 3-dehydroquinate synthase from Shewanella pealeana (strain ATCC 700345 / ANG-SQ1).